Reading from the N-terminus, the 445-residue chain is Signal recognition particle 54 kDa protein (445 aa).

Residues 102–109 (GVQGSGKT), 184–188 (DTAGR), and 244–247 (TKMD) each bind GTP.

This sequence belongs to the GTP-binding SRP family. SRP54 subfamily. In terms of assembly, part of the signal recognition particle protein translocation system, which is composed of SRP and FtsY. Archaeal SRP consists of a 7S RNA molecule of 300 nucleotides and two protein subunits: SRP54 and SRP19.

It is found in the cytoplasm. The enzyme catalyses GTP + H2O = GDP + phosphate + H(+). In terms of biological role, involved in targeting and insertion of nascent membrane proteins into the cytoplasmic membrane. Binds to the hydrophobic signal sequence of the ribosome-nascent chain (RNC) as it emerges from the ribosomes. The SRP-RNC complex is then targeted to the cytoplasmic membrane where it interacts with the SRP receptor FtsY. The protein is Signal recognition particle 54 kDa protein of Sulfurisphaera tokodaii (strain DSM 16993 / JCM 10545 / NBRC 100140 / 7) (Sulfolobus tokodaii).